The chain runs to 427 residues: Methylthioribose kinase 2 (427 aa).

Residues Asp49–Asn53, Lys68, and Arg122–Ile124 contribute to the ATP site. A substrate-binding site is contributed by Asn51. Residue Asp243 participates in substrate binding. Asp260–Glu262 is a binding site for ATP. Position 370 (Arg370) interacts with substrate.

It belongs to the methylthioribose kinase family. In terms of assembly, homodimer.

It catalyses the reaction 5-(methylsulfanyl)-D-ribose + ATP = 5-(methylsulfanyl)-alpha-D-ribose 1-phosphate + ADP + H(+). The protein operates within amino-acid biosynthesis; L-methionine biosynthesis via salvage pathway; S-methyl-5-thio-alpha-D-ribose 1-phosphate from S-methyl-5'-thioadenosine (hydrolase route): step 2/2. Functionally, catalyzes the phosphorylation of methylthioribose into methylthioribose-1-phosphate. In Oryza sativa subsp. japonica (Rice), this protein is Methylthioribose kinase 2 (MTK2).